A 201-amino-acid polypeptide reads, in one-letter code: Achaete-scute complex protein T5 (201 aa).

A compositionally biased stretch (polar residues) spans 1–10 (MALGSENHSV). Residues 1-32 (MALGSENHSVFNDDEESSSAFNGPSVIRRNAR) form a disordered region. The bHLH domain occupies 24–90 (PSVIRRNARE…KMAVEYIRRL (67 aa)).

In terms of assembly, efficient DNA binding requires dimerization with another bHLH protein. L(1)SC, SC and AC strongly label the presumptive stomatogastric nervous system, while ASE is more prominent in the presumptive procephalic lobe.

In terms of biological role, AS-C proteins are involved in the determination of the neuronal precursors in the peripheral nervous system and the central nervous system. This Drosophila melanogaster (Fruit fly) protein is Achaete-scute complex protein T5 (ac).